The following is a 449-amino-acid chain: Trigger factor (449 aa).

The 86-residue stretch at 173-258 (GDRVTVDFVG…LKKVEWPHLP (86 aa)) folds into the PPIase FKBP-type domain.

This sequence belongs to the FKBP-type PPIase family. Tig subfamily.

It is found in the cytoplasm. The enzyme catalyses [protein]-peptidylproline (omega=180) = [protein]-peptidylproline (omega=0). Involved in protein export. Acts as a chaperone by maintaining the newly synthesized protein in an open conformation. Functions as a peptidyl-prolyl cis-trans isomerase. This is Trigger factor from Burkholderia mallei (strain NCTC 10229).